A 189-amino-acid chain; its full sequence is Chitin synthase 1 (189 aa).

Belongs to the chitin synthase family. Class I subfamily.

It is found in the cell membrane. The enzyme catalyses [(1-&gt;4)-N-acetyl-beta-D-glucosaminyl](n) + UDP-N-acetyl-alpha-D-glucosamine = [(1-&gt;4)-N-acetyl-beta-D-glucosaminyl](n+1) + UDP + H(+). Polymerizes chitin, a structural polymer of the cell wall and septum, by transferring the sugar moiety of UDP-GlcNAc to the non-reducing end of the growing chitin polymer. In Botryotinia fuckeliana (Noble rot fungus), this protein is Chitin synthase 1 (chs1).